Consider the following 250-residue polypeptide: 1-(5-phosphoribosyl)-5-[(5-phosphoribosylamino)methylideneamino] imidazole-4-carboxamide isomerase (250 aa).

Asp7 functions as the Proton acceptor in the catalytic mechanism. Residue Asp129 is the Proton donor of the active site.

The protein belongs to the HisA/HisF family.

It localises to the cytoplasm. It carries out the reaction 1-(5-phospho-beta-D-ribosyl)-5-[(5-phospho-beta-D-ribosylamino)methylideneamino]imidazole-4-carboxamide = 5-[(5-phospho-1-deoxy-D-ribulos-1-ylimino)methylamino]-1-(5-phospho-beta-D-ribosyl)imidazole-4-carboxamide. It participates in amino-acid biosynthesis; L-histidine biosynthesis; L-histidine from 5-phospho-alpha-D-ribose 1-diphosphate: step 4/9. This chain is 1-(5-phosphoribosyl)-5-[(5-phosphoribosylamino)methylideneamino] imidazole-4-carboxamide isomerase, found in Shewanella denitrificans (strain OS217 / ATCC BAA-1090 / DSM 15013).